The primary structure comprises 937 residues: Vacuolar membrane protease (937 aa).

The Cytoplasmic portion of the chain corresponds to 1–16; that stretch reads PNGFVKFIRSIFGYRK. The chain crosses the membrane as a helical span at residues 17–37; the sequence is TSLTLFVILTYVAVLLLAYLD. Residues 38-373 are Vacuolar-facing; that stretch reads HSLYYSVDLP…FPTSQVVVAS (336 aa). Asn106 and Asn140 each carry an N-linked (GlcNAc...) asparagine glycan. Zn(2+) contacts are provided by His154 and Asp166. Residue Glu201 is the Proton acceptor of the active site. Residues Glu202, Glu227, and His300 each coordinate Zn(2+). Residues 374–394 traverse the membrane as a helical segment; sequence ILLLVLIPGISIPFLIIIFGY. The Cytoplasmic segment spans residues 395–407; it reads KKNWELSFVNVTK. The chain crosses the membrane as a helical span at residues 408-428; the sequence is FPISLAISAALLNLFTNGFIV. Residues 429–437 are Vacuolar-facing; it reads PFNQFLPNS. A helical membrane pass occupies residues 438–458; it reads SPFALVAILFATFLLLNYLIL. Residues 459–475 are Cytoplasmic-facing; the sequence is NGINLIFVSYKIVNHDE. The chain crosses the membrane as a helical span at residues 476-496; that stretch reads KLISIIETSFLYWVVLIYSTA. At 497 to 510 the chain is on the vacuolar side; that stretch reads KLANNVIGDDHSGE. A helical transmembrane segment spans residues 511–531; the sequence is FPIIFLCALQAVASIFGLIGW. At 532 to 580 the chain is on the cytoplasmic side; the sequence is SFKPVPKEHYVVVPQEEAEPLLGSSDNFNYGSPDVEDDRLVSDGSYDWS. A helical membrane pass occupies residues 581-601; the sequence is IQFLTIVPISTYLIYNSGFLV. The Vacuolar segment spans residues 602-618; it reads VDGINKSIQESLISQNL. A glycan (N-linked (GlcNAc...) asparagine) is linked at Asn606. The helical transmembrane segment at 619-639 threads the bilayer; that stretch reads IYKLLQTFAISLSIPLLPFIF. Residues 640–643 lie on the Cytoplasmic side of the membrane; it reads KVNR. Residues 644-664 form a helical membrane-spanning segment; it reads LFVLALFLISTIGVLFVATAD. Over 665–937 the chain is Vacuolar; it reads SFNVANPLKL…LVSVSKTVEL (273 aa). N-linked (GlcNAc...) asparagine glycans are attached at residues Asn758, Asn870, and Asn887.

This sequence belongs to the peptidase M28 family. Zn(2+) is required as a cofactor.

Its subcellular location is the vacuole membrane. In terms of biological role, may be involved in vacuolar sorting and osmoregulation. The polypeptide is Vacuolar membrane protease (Scheffersomyces stipitis (strain ATCC 58785 / CBS 6054 / NBRC 10063 / NRRL Y-11545) (Yeast)).